A 336-amino-acid chain; its full sequence is Galectin-12 (336 aa).

2 Galectin domains span residues 49-183 (YVTT…VGFL) and 212-336 (CSHA…CVHS).

Not widely expressed. Predominantly expressed in adipose tissue.

The protein resides in the nucleus. Binds lactose. May participate in the apoptosis of adipocytes. The sequence is that of Galectin-12 (LGALS12) from Homo sapiens (Human).